Consider the following 726-residue polypeptide: Dipeptidyl-peptidase 5 (726 aa).

Positions 1–19 (MAPAKWLIASLAFASTGLA) are cleaved as a signal peptide. N-linked (GlcNAc...) asparagine glycosylation is found at Asn-96 and Asn-252. A disordered region spans residues 268-292 (VAEPINKRNGPRTPHGIEGASSSPV). A glycan (N-linked (GlcNAc...) asparagine) is linked at Asn-485. The Charge relay system role is filled by Ser-558. N-linked (GlcNAc...) asparagine glycosylation occurs at Asn-605. Active-site charge relay system residues include Asp-641 and His-673. N-linked (GlcNAc...) asparagine glycosylation occurs at Asn-699.

The protein belongs to the peptidase S9C family.

It is found in the secreted. Extracellular dipeptidyl-peptidase which removes N-terminal dipeptides sequentially from polypeptides having unsubstituted N-termini. Contributes to pathogenicity. The sequence is that of Dipeptidyl-peptidase 5 (DPP5) from Arthroderma otae (Microsporum canis).